The following is a 506-amino-acid chain: MKQILFMDTTLRDGEQSPGVNLNEQEKLQIARQLEKLGIDVMEAGFAAASEGDFQSVKRIAESIQNASVMSLARAKESDIRKAYEAVKRAVSPRLHVFLATSDIHMKYKLCMSKEDVLDSIHRSVILGKSLFPTVQFSAEDATRTAQPFLAEAVEVAIRAGADVINIPDTVGYTHPEEYYSLFQYLQESVPSYEKAIFSCHCHDDLGMAVANSLAAIEGGALQVEGTINGIGERAGNAALEEVAVALHIRKDHYKTQSSIILKEIKATSTLVSRLTGMMIPKNKAIVGANAFAHESGIHQDGVLKEVTTYEIIAPELIGESQNLFVLGKHSGRHAFTERMKELGYELTQKERDAAFEAFKALADRKKEITDEDLRALMLGEAALLTQQYNIKQLQVHFVSNHIQCATVVLQDGKGNKYEDAATGAGSIEAIYHAIQRILEMECKLVDYRIQSITQGQDALAHVHVELKEGPHQVSGFGVAQDVLEASARAYVHAAGKLKALLTLVK.

The 263-residue stretch at 4 to 266 (ILFMDTTLRD…QSSIILKEIK (263 aa)) folds into the Pyruvate carboxyltransferase domain. Positions 13, 201, 203, and 237 each coordinate Mn(2+). Residues 390–506 (NIKQLQVHFV…KLKALLTLVK (117 aa)) are regulatory domain.

This sequence belongs to the alpha-IPM synthase/homocitrate synthase family. LeuA type 1 subfamily. As to quaternary structure, homodimer. Mn(2+) serves as cofactor.

The protein localises to the cytoplasm. The catalysed reaction is 3-methyl-2-oxobutanoate + acetyl-CoA + H2O = (2S)-2-isopropylmalate + CoA + H(+). Its pathway is amino-acid biosynthesis; L-leucine biosynthesis; L-leucine from 3-methyl-2-oxobutanoate: step 1/4. In terms of biological role, catalyzes the condensation of the acetyl group of acetyl-CoA with 3-methyl-2-oxobutanoate (2-ketoisovalerate) to form 3-carboxy-3-hydroxy-4-methylpentanoate (2-isopropylmalate). In Bacillus cytotoxicus (strain DSM 22905 / CIP 110041 / 391-98 / NVH 391-98), this protein is 2-isopropylmalate synthase.